A 401-amino-acid polypeptide reads, in one-letter code: Rho-N domain-containing protein 1, chloroplastic (401 aa).

Residues 1-63 (MAMSGTFHLT…VPNRSSFVCR (63 aa)) constitute a chloroplast transit peptide. Disordered stretches follow at residues 73–129 (PDFS…PGPR) and 180–361 (KHSG…EEAV). 3 stretches are compositionally biased toward polar residues: residues 102-126 (DMLS…TSSP), 210-223 (TGNL…DNNA), and 240-265 (PRSQ…VTWT). Residues 266–290 (QKKDTVELHDEPEHEPAYEHEHEPE) are compositionally biased toward basic and acidic residues. The span at 339 to 358 (LSDDDESLDDADEDSDEAEE) shows a compositional bias: acidic residues. The stretch at 339–371 (LSDDDESLDDADEDSDEAEEEAVKDLSELKLVE) forms a coiled coil.

As to quaternary structure, homodimer or homomultimer. Part of a chloroplastic degradosome-like complex. Interacts with RNE.

Its subcellular location is the plastid. It is found in the chloroplast. Its function is as follows. Binds to and supports processing of specific plastid RNAs. Associates via its C-terminal Rho-N domain to single stranded regions of 16S and 23S rRNAs or to rbcL mRNAs. May be involved in targeting transcripts to RNases such as RNE or RNase J. The sequence is that of Rho-N domain-containing protein 1, chloroplastic (RHON1) from Arabidopsis thaliana (Mouse-ear cress).